Reading from the N-terminus, the 370-residue chain is Dual-specificity RNA methyltransferase RlmN (370 aa).

The Proton acceptor role is filled by E93. In terms of domain architecture, Radical SAM core spans A99–D337. C106 and C343 are oxidised to a cystine. Residues C113, C117, and C120 each coordinate [4Fe-4S] cluster. S-adenosyl-L-methionine is bound by residues G167 to E168, S199, S221 to H223, and N300. The active-site S-methylcysteine intermediate is the C343.

It belongs to the radical SAM superfamily. RlmN family. The cofactor is [4Fe-4S] cluster.

Its subcellular location is the cytoplasm. The catalysed reaction is adenosine(2503) in 23S rRNA + 2 reduced [2Fe-2S]-[ferredoxin] + 2 S-adenosyl-L-methionine = 2-methyladenosine(2503) in 23S rRNA + 5'-deoxyadenosine + L-methionine + 2 oxidized [2Fe-2S]-[ferredoxin] + S-adenosyl-L-homocysteine. It catalyses the reaction adenosine(37) in tRNA + 2 reduced [2Fe-2S]-[ferredoxin] + 2 S-adenosyl-L-methionine = 2-methyladenosine(37) in tRNA + 5'-deoxyadenosine + L-methionine + 2 oxidized [2Fe-2S]-[ferredoxin] + S-adenosyl-L-homocysteine. Specifically methylates position 2 of adenine 2503 in 23S rRNA and position 2 of adenine 37 in tRNAs. m2A2503 modification seems to play a crucial role in the proofreading step occurring at the peptidyl transferase center and thus would serve to optimize ribosomal fidelity. The chain is Dual-specificity RNA methyltransferase RlmN from Francisella tularensis subsp. tularensis (strain FSC 198).